The primary structure comprises 739 residues: Copalyl diphosphate synthase 1 (739 aa).

Residue K154 participates in substrate binding. Positions 287 and 289 each coordinate Mg(2+). Positions 287 to 290 (DADD) match the DXDD motif motif. K373 provides a ligand contact to substrate.

It belongs to the terpene synthase family. The cofactor is Mg(2+).

It catalyses the reaction (2E,6E,10E)-geranylgeranyl diphosphate = (+)-copalyl diphosphate. Its pathway is secondary metabolite biosynthesis; terpenoid biosynthesis. Monofunctional diterpene synthase converting geranylgeranyl diphosphate to copalyl diphosphate. This Selaginella moellendorffii (Spikemoss) protein is Copalyl diphosphate synthase 1 (CPS1).